The chain runs to 121 residues: Large ribosomal subunit protein bL12 (121 aa).

It belongs to the bacterial ribosomal protein bL12 family. As to quaternary structure, homodimer. Part of the ribosomal stalk of the 50S ribosomal subunit. Forms a multimeric L10(L12)X complex, where L10 forms an elongated spine to which 2 to 4 L12 dimers bind in a sequential fashion. Binds GTP-bound translation factors.

Functionally, forms part of the ribosomal stalk which helps the ribosome interact with GTP-bound translation factors. Is thus essential for accurate translation. This Lactococcus lactis subsp. cremoris (strain MG1363) protein is Large ribosomal subunit protein bL12.